Here is a 658-residue protein sequence, read N- to C-terminus: Probable transketolase (658 aa).

H24 is a binding site for substrate. Thiamine diphosphate-binding positions include H64 and 113-115 (GPL). Residue D154 participates in Mg(2+) binding. Thiamine diphosphate contacts are provided by G155 and N184. N184 and I186 together coordinate Mg(2+). 3 residues coordinate substrate: H259, R354, and S381. H259 serves as a coordination point for thiamine diphosphate. The active-site Proton donor is the E408. F434 lines the thiamine diphosphate pocket. H458, D466, and R517 together coordinate substrate.

This sequence belongs to the transketolase family. In terms of assembly, homodimer. The cofactor is Mg(2+). Requires Ca(2+) as cofactor. It depends on Mn(2+) as a cofactor. Co(2+) is required as a cofactor. Thiamine diphosphate serves as cofactor.

It carries out the reaction D-sedoheptulose 7-phosphate + D-glyceraldehyde 3-phosphate = aldehydo-D-ribose 5-phosphate + D-xylulose 5-phosphate. Functionally, necessary for high-efficiency recombination chromosomal DNA during genetic transformation. In terms of biological role, catalyzes the transfer of a two-carbon ketol group from a ketose donor to an aldose acceptor, via a covalent intermediate with the cofactor thiamine pyrophosphate. In Streptococcus pneumoniae serotype 4 (strain ATCC BAA-334 / TIGR4), this protein is Probable transketolase (tkt).